The chain runs to 313 residues: Ester hydrolase C11orf54 homolog (313 aa).

The Zn(2+) site is built by His-264, His-266, and His-276.

Monomer. Zn(2+) serves as cofactor.

The protein localises to the nucleus. Its subcellular location is the cytoplasm. Its function is as follows. Exhibits ester hydrolase activity on the substrate p-nitrophenyl acetate, in vitro. May regulate DNA damage and repair by regulating HIF1A degradation via chaperone-mediated autophagy (CMA). This chain is Ester hydrolase C11orf54 homolog, found in Xenopus tropicalis (Western clawed frog).